A 687-amino-acid polypeptide reads, in one-letter code: Glycine--tRNA ligase beta subunit (687 aa).

It belongs to the class-II aminoacyl-tRNA synthetase family. In terms of assembly, tetramer of two alpha and two beta subunits.

It is found in the cytoplasm. The enzyme catalyses tRNA(Gly) + glycine + ATP = glycyl-tRNA(Gly) + AMP + diphosphate. The protein is Glycine--tRNA ligase beta subunit of Geobacter sulfurreducens (strain ATCC 51573 / DSM 12127 / PCA).